Consider the following 740-residue polypeptide: Catalase-peroxidase (740 aa).

The tract at residues 1-44 is disordered; it reads MSDSCPVAHDGNTASTSESENPAIPSPTPTGNRPRTNRDWWPNQ. A cross-link (tryptophyl-tyrosyl-methioninium (Trp-Tyr) (with M-257)) is located at residues 109–231; the sequence is WHAAGTYRIA…LGAVQMGLIY (123 aa). Histidine 110 functions as the Proton acceptor in the catalytic mechanism. Residues 231–257 constitute a cross-link (tryptophyl-tyrosyl-methioninium (Tyr-Met) (with W-109)); sequence YVNPEGPNGQPDPVAAARDIRETFARM. Histidine 272 is a heme b binding site.

It belongs to the peroxidase family. Peroxidase/catalase subfamily. In terms of assembly, homodimer or homotetramer. Heme b serves as cofactor. Post-translationally, formation of the three residue Trp-Tyr-Met cross-link is important for the catalase, but not the peroxidase activity of the enzyme.

The catalysed reaction is H2O2 + AH2 = A + 2 H2O. The enzyme catalyses 2 H2O2 = O2 + 2 H2O. Functionally, bifunctional enzyme with both catalase and broad-spectrum peroxidase activity. This chain is Catalase-peroxidase, found in Rhodococcus erythropolis (strain PR4 / NBRC 100887).